A 94-amino-acid polypeptide reads, in one-letter code: Small ribosomal subunit protein eS24 (94 aa).

Belongs to the eukaryotic ribosomal protein eS24 family.

The chain is Small ribosomal subunit protein eS24 from Nanoarchaeum equitans (strain Kin4-M).